The sequence spans 639 residues: MIHITLPDGSQREFAGPVTVAEVAASIGSGLAKAALAGKIGDKVVDTSYQITQDSPLSIVTAKDADGLEVIRHSTAHLLAYAVKELFPDAQVTIGPVIENGFYYDFSYKRPFTPEDLAAIEKRMAELAAKDEPVVRRVLPRDEAVAYFKGLGEHYKAEIIASIPTNEDVSLYREGGFEDLCRGPHVPSTGKLKFFKLMKVAGAYWRGDHRNEMLQRIYGTAWATKEELQEYLHMLEEAEKRDHRKLGRELDLFHIDEHSPGTVFWHPKGWTLWQEVEQYMRRVYRDNGYQEVKGPQILDKTLWEKTGHWDKYRDNMFTTESEKRDYALKPMNCPGHILIFKQGIKSYRDLPLRYGEFGQCHRNEPTGGLHGIMRVRGFTQDDGHIFCTEDHILAECTAYTALLQKVYKDFGFHNIIYKVATRPEARIGSDESWDKAEHALMESLRASGCEFEIAPGDGAFYGPKIEYTLKDAIGRQWQCGTMQVDFSMPERLDAEYVGEDGGRHRPVMLHRAIVGSLERFIGILIEEHAGALPVWLAPVQVAVLNITDAQQDYCREIAAKLQKALPNQGLRVVTDLRNEKITYKIREHSLQKLPYILVAGDKEKAAGAVAVRARGNKDLGVMSLDAFVDLIAQDIASKV.

The TGS domain occupies M1–T61. Positions D242–P533 are catalytic. The Zn(2+) site is built by C333, H384, and H510.

The protein belongs to the class-II aminoacyl-tRNA synthetase family. In terms of assembly, homodimer. The cofactor is Zn(2+).

The protein localises to the cytoplasm. It catalyses the reaction tRNA(Thr) + L-threonine + ATP = L-threonyl-tRNA(Thr) + AMP + diphosphate + H(+). Functionally, catalyzes the attachment of threonine to tRNA(Thr) in a two-step reaction: L-threonine is first activated by ATP to form Thr-AMP and then transferred to the acceptor end of tRNA(Thr). Also edits incorrectly charged L-seryl-tRNA(Thr). This Acidovorax sp. (strain JS42) protein is Threonine--tRNA ligase.